Consider the following 158-residue polypeptide: Protein GLUTAMINE DUMPER 1 (158 aa).

Topologically, residues Met-1–Tyr-36 are extracellular. Residues Leu-37–Cys-57 form a helical membrane-spanning segment. The Cytoplasmic segment spans residues Ser-58–His-158. A disordered region spans residues Ser-65–Ala-85. Residues Gly-66–Glu-76 are compositionally biased toward acidic residues. The VIMAG signature appears at Val-96–Gly-100. Residues Ile-126–His-158 are disordered. Residues Ser-131–Gly-151 are compositionally biased toward basic and acidic residues.

The protein belongs to the GLUTAMINE DUMPER 1 (TC 9.B.60) family. In terms of assembly, interacts with LOG2. In terms of processing, ubiquitinated by LOG2 (in vitro). As to expression, expressed in the vascular tissues and in hydathodes. Expressed in the phloem and xylem (at the protein level).

The protein resides in the cell membrane. Its function is as follows. Probable subunit of an amino acid transporter involved in the regulation of the amino acid metabolism. Stimulates amino acid export by activating nonselective amino acid facilitators. Required the interaction with the RING-type E3 ubiquitin-protein ligase LOG2 to fulfill its function. Plays a role in the Gln export at hydathodes, at xylem parenchyma into xylem sap and from mesophyll into leaf apoplasm. Acts upstream genes involved in the salicylic acid (SA) pathway and in the geminivirus-host interaction. The chain is Protein GLUTAMINE DUMPER 1 (GDU1) from Arabidopsis thaliana (Mouse-ear cress).